A 478-amino-acid chain; its full sequence is Serralysin C (478 aa).

Positions Met1–Ser17 are excised as a propeptide. Residue His187 coordinates Zn(2+). Residue Glu188 is part of the active site. Zn(2+)-binding residues include His191 and Tyr227. Positions 264, 266, 296, 298, 299, 301, 338, 340, 345, 347, 349, 354, 356, 358, 362, 363, 364, 365, 367, 371, 372, 374, 376, 380, 381, 383, 385, 394, 401, and 411 each coordinate Ca(2+). 2 Hemolysin-type calcium-binding repeats span residues Ile343–Leu360 and Arg361–Leu378.

This sequence belongs to the peptidase M10B family. Ca(2+) is required as a cofactor. The cofactor is Zn(2+).

It localises to the secreted. The enzyme catalyses Preferential cleavage of bonds with hydrophobic residues in P1'.. This chain is Serralysin C (prtC), found in Dickeya chrysanthemi (Pectobacterium chrysanthemi).